The sequence spans 130 residues: DNA-directed RNA polymerase subunit omega (130 aa).

Disordered regions lie at residues 79 to 98 (EPEPDTVPLIGSAGASVDAD) and 109 to 130 (EEELLKGLEGLAPPEEQPEEDE).

Belongs to the RNA polymerase subunit omega family. In terms of assembly, the RNAP catalytic core consists of 2 alpha, 1 beta, 1 beta' and 1 omega subunit. When a sigma factor is associated with the core the holoenzyme is formed, which can initiate transcription.

The enzyme catalyses RNA(n) + a ribonucleoside 5'-triphosphate = RNA(n+1) + diphosphate. Promotes RNA polymerase assembly. Latches the N- and C-terminal regions of the beta' subunit thereby facilitating its interaction with the beta and alpha subunits. This chain is DNA-directed RNA polymerase subunit omega (rpoZ), found in Bradyrhizobium diazoefficiens (strain JCM 10833 / BCRC 13528 / IAM 13628 / NBRC 14792 / USDA 110).